We begin with the raw amino-acid sequence, 140 residues long: Ribosome-binding factor A (140 aa).

A disordered region spans residues 115-140 (EDERQQRGDIPPGSDQQPGSDEQPTG). Positions 128-140 (SDQQPGSDEQPTG) are enriched in polar residues.

Belongs to the RbfA family. In terms of assembly, monomer. Binds 30S ribosomal subunits, but not 50S ribosomal subunits or 70S ribosomes.

It localises to the cytoplasm. Its function is as follows. One of several proteins that assist in the late maturation steps of the functional core of the 30S ribosomal subunit. Associates with free 30S ribosomal subunits (but not with 30S subunits that are part of 70S ribosomes or polysomes). Required for efficient processing of 16S rRNA. May interact with the 5'-terminal helix region of 16S rRNA. This chain is Ribosome-binding factor A, found in Synechococcus sp. (strain CC9605).